A 276-amino-acid chain; its full sequence is Large ribosomal subunit protein uL2 (276 aa).

Disordered stretches follow at residues 35-58 (RKLS…GGGH) and 218-276 (RPIT…KNRK). The segment covering 255–276 (RRPKKASNKMIVRRRPNGKNRK) has biased composition (basic residues).

This sequence belongs to the universal ribosomal protein uL2 family. As to quaternary structure, part of the 50S ribosomal subunit. Forms a bridge to the 30S subunit in the 70S ribosome.

One of the primary rRNA binding proteins. Required for association of the 30S and 50S subunits to form the 70S ribosome, for tRNA binding and peptide bond formation. It has been suggested to have peptidyltransferase activity; this is somewhat controversial. Makes several contacts with the 16S rRNA in the 70S ribosome. This chain is Large ribosomal subunit protein uL2, found in Bifidobacterium adolescentis (strain ATCC 15703 / DSM 20083 / NCTC 11814 / E194a).